A 316-amino-acid chain; its full sequence is Alpha- and gamma-adaptin-binding protein p34 (316 aa).

The segment at 198–232 (ASAESCHSEQQEPSPTAERTESLPGHHSGACGSAG) is disordered. Over residues 222 to 232 (GHHSGACGSAG) the composition is skewed to low complexity. Phosphoserine is present on residues Ser311 and Ser312.

In terms of assembly, associated with AP-1 and AP-2 complexes.

Its subcellular location is the cytoplasm. It is found in the cytosol. May be involved in endocytic recycling of growth factor receptors such as EGFR. This Mus musculus (Mouse) protein is Alpha- and gamma-adaptin-binding protein p34 (Aagab).